The following is a 354-amino-acid chain: Protein-arginine kinase (354 aa).

Residues 24-254 (IVLSSRIRLA…QQIIQQEKLA (231 aa)) form the Phosphagen kinase C-terminal domain. ATP contacts are provided by residues 27–31 (SSRIR), histidine 92, arginine 125, 176–180 (RASVM), and 207–212 (RGIYGE). Residues 337–342 (RDYRRA) carry the RDXXRA motif of the pArg binding pocket involved in allosteric regulation motif.

This sequence belongs to the ATP:guanido phosphotransferase family.

The enzyme catalyses L-arginyl-[protein] + ATP = N(omega)-phospho-L-arginyl-[protein] + ADP + H(+). Appears to be allosterically activated by the binding of pArg-containing polypeptides to the pArg-binding pocket localized in the C-terminal domain of McsB. Catalyzes the specific phosphorylation of arginine residues in a large number of proteins. Is part of the bacterial stress response system. Protein arginine phosphorylation has a physiologically important role and is involved in the regulation of many critical cellular processes, such as protein homeostasis, motility, competence, and stringent and stress responses, by regulating gene expression and protein activity. The polypeptide is Protein-arginine kinase (Bacillus cereus (strain B4264)).